Reading from the N-terminus, the 490-residue chain is Tektin-3 (490 aa).

3 O-linked (GalNAc...) threonine glycosylation sites follow: threonine 7, threonine 9, and threonine 11. Asparagine 41, asparagine 86, asparagine 111, and asparagine 276 each carry an N-linked (GlcNAc...) asparagine glycan. Positions methionine 415–valine 461 form a coiled coil.

The protein belongs to the tektin family. Microtubule inner protein component of sperm flagellar doublet microtubules. Interacts with TEKT1, TEKT2, TEKT4 and TEKT5. Interacts with CCDC38. N- and O-glycosylated. In terms of processing, ubiquitinated, leading to its degradation. Deubiquitinated by USP16, promoting its stability. Post-translationally, may be proteolytically processed during the epididymal transit of spermatozoa. As to expression, expressed preferentially in testis. Expressed predominantly in late pachytene spermatocytes and early round spermatids. Expressed in spermatozoa.

It localises to the cytoplasm. The protein localises to the cytoskeleton. The protein resides in the cilium axoneme. It is found in the flagellum axoneme. Its subcellular location is the cytoplasmic vesicle. It localises to the secretory vesicle. The protein localises to the acrosome outer membrane. In terms of biological role, microtubule inner protein (MIP) part of the dynein-decorated doublet microtubules (DMTs) in cilia and flagellar axoneme. Forms filamentous polymers in the walls of ciliary and flagellar microtubules. Required for normal sperm mobility. This Mus musculus (Mouse) protein is Tektin-3 (Tekt3).